The primary structure comprises 406 residues: DNA-binding transcriptional repressor Mlc (406 aa).

The segment at residues 33-42 (RIDLSRLAQL) is a DNA-binding region (H-T-H motif). Residues His-247, Cys-257, Cys-259, and Cys-264 each coordinate Zn(2+).

Belongs to the ROK (NagC/XylR) family. As to quaternary structure, homodimer. Homotetramer. There is probably an equilibrium between the dimeric and the tetrameric form. Interacts with dephosphorylated PtsG. Mlc and PtsG EIIB domain form a complex with the 1:1 stoichiometry. Interacts with MtfA.

It is found in the cytoplasm. Its activity is regulated as follows. Activity is modulated by glucose. In the presence of glucose, is inhibited by interaction with the dephosphorylated form of PtsG, which sequesters Mlc in the inner membrane and prevents Mlc binding to its target promoters. The restriction of conformational freedom resulting from the anchoring of four ends of Mlc to the membrane could be the primary cause of its loss of DNA-binding activity in vivo. Activity is also inhibited by interaction with the Mlc titration factor A (mtfA). The inactivation mechanisms of Mlc by dephosphorylated PtsG and MtfA differ significantly. Its function is as follows. Global regulator of carbohydrate metabolism. Represses the expression of several genes involved in sugar transport and utilization, in particular phosphoenolpyruvate-carbohydrate phosphotransferase system (PTS) genes. Represses expression of ptsG (EIICB(Glc)), which encodes the PTS system glucose-specific EIICB component. Also represses the expression of the manXYZ operon, encoding the mannose-specific PTS system, expression of malT, encoding the transcriptional activator of the maltose regulon, and expression of the pts operon, composed of the genes ptsH, ptsI and crr. Represses its own expression. Acts by binding to the regulatory region of the target genes. The chain is DNA-binding transcriptional repressor Mlc from Escherichia coli (strain K12).